Consider the following 411-residue polypeptide: Gamma-glutamyl phosphate reductase (411 aa).

This sequence belongs to the gamma-glutamyl phosphate reductase family.

Its subcellular location is the cytoplasm. It catalyses the reaction L-glutamate 5-semialdehyde + phosphate + NADP(+) = L-glutamyl 5-phosphate + NADPH + H(+). The protein operates within amino-acid biosynthesis; L-proline biosynthesis; L-glutamate 5-semialdehyde from L-glutamate: step 2/2. Catalyzes the NADPH-dependent reduction of L-glutamate 5-phosphate into L-glutamate 5-semialdehyde and phosphate. The product spontaneously undergoes cyclization to form 1-pyrroline-5-carboxylate. This chain is Gamma-glutamyl phosphate reductase, found in Nautilia profundicola (strain ATCC BAA-1463 / DSM 18972 / AmH).